A 322-amino-acid chain; its full sequence is Fructose-1,6-bisphosphatase class 1 1 (322 aa).

Mg(2+)-binding residues include glutamate 84, aspartate 103, leucine 105, and aspartate 106. Substrate contacts are provided by residues 106 to 109, asparagine 198, and lysine 264; that span reads DGSS. Glutamate 270 contacts Mg(2+).

It belongs to the FBPase class 1 family. As to quaternary structure, homotetramer. It depends on Mg(2+) as a cofactor.

The protein resides in the cytoplasm. It catalyses the reaction beta-D-fructose 1,6-bisphosphate + H2O = beta-D-fructose 6-phosphate + phosphate. It participates in carbohydrate biosynthesis; gluconeogenesis. In Pseudoalteromonas translucida (strain TAC 125), this protein is Fructose-1,6-bisphosphatase class 1 1.